The primary structure comprises 433 residues: Glutamate-1-semialdehyde 2,1-aminomutase (433 aa).

Lys273 carries the N6-(pyridoxal phosphate)lysine modification.

Belongs to the class-III pyridoxal-phosphate-dependent aminotransferase family. HemL subfamily. In terms of assembly, homodimer. It depends on pyridoxal 5'-phosphate as a cofactor.

The protein localises to the cytoplasm. The catalysed reaction is (S)-4-amino-5-oxopentanoate = 5-aminolevulinate. The protein operates within porphyrin-containing compound metabolism; protoporphyrin-IX biosynthesis; 5-aminolevulinate from L-glutamyl-tRNA(Glu): step 2/2. It functions in the pathway porphyrin-containing compound metabolism; chlorophyll biosynthesis. The sequence is that of Glutamate-1-semialdehyde 2,1-aminomutase from Gloeothece citriformis (strain PCC 7424) (Cyanothece sp. (strain PCC 7424)).